The primary structure comprises 717 residues: DNA-binding protein RFX2 (717 aa).

Residues 1–28 (MQNSEGGADSPASVALRPAAQPMPASPQ) are disordered. At Ser26 the chain carries Phosphoserine. The segment at residues 194–269 (HLQWLLDNYE…YHYYGIRLKP (76 aa)) is a DNA-binding region (RFX-type winged-helix). Residues 286–318 (RQQPTHQKPRYRPAQKSDSLGDGSAHSNMHGMP) form a disordered region. Ser411 bears the Phosphoserine mark. The span at 685 to 710 (DGHSSEADVDGRSLGEPLVKRERSDP) shows a compositional bias: basic and acidic residues. The interval 685–717 (DGHSSEADVDGRSLGEPLVKRERSDPSHPLQGI) is disordered.

It belongs to the RFX family. As to quaternary structure, homodimer; probably only forms homodimers in testis. Heterodimer; heterodimerizes with RFX1 and RFX3.

It localises to the nucleus. Its subcellular location is the cytoplasm. Functionally, transcription factor that acts as a key regulator of spermatogenesis. Acts by regulating expression of genes required for the haploid phase during spermiogenesis, such as genes required for cilium assembly and function. Recognizes and binds the X-box, a regulatory motif with DNA sequence 5'-GTNRCC(0-3N)RGYAAC-3' present on promoters. Probably activates transcription of the testis-specific histone gene H1-6. The chain is DNA-binding protein RFX2 (Rfx2) from Mus musculus (Mouse).